We begin with the raw amino-acid sequence, 817 residues long: Lon protease (817 aa).

Residues 44 to 239 (LPILPLRNTV…ETLRYMNVEL (196 aa)) enclose the Lon N-terminal domain. 390-397 (GPPGVGKT) provides a ligand contact to ATP. A Lon proteolytic domain is found at 626–807 (NDVAGVVTGL…SEVLAIALTD (182 aa)). Catalysis depends on residues S713 and K756.

The protein belongs to the peptidase S16 family. Homohexamer. Organized in a ring with a central cavity.

It localises to the cytoplasm. The enzyme catalyses Hydrolysis of proteins in presence of ATP.. ATP-dependent serine protease that mediates the selective degradation of mutant and abnormal proteins as well as certain short-lived regulatory proteins. Required for cellular homeostasis and for survival from DNA damage and developmental changes induced by stress. Degrades polypeptides processively to yield small peptide fragments that are 5 to 10 amino acids long. Binds to DNA in a double-stranded, site-specific manner. The sequence is that of Lon protease from Flavobacterium johnsoniae (strain ATCC 17061 / DSM 2064 / JCM 8514 / BCRC 14874 / CCUG 350202 / NBRC 14942 / NCIMB 11054 / UW101) (Cytophaga johnsonae).